The primary structure comprises 499 residues: Serine/threonine-protein kinase SSN3 (499 aa).

A disordered region spans residues 1–21 (MSHSNPPTGASGGPGSASASA). The region spanning 61-442 (YQVIGFISSG…AAAALQHNFF (382 aa)) is the Protein kinase domain. ATP is bound by residues 67–75 (ISSGTYGRV) and Lys-91. Residue Asp-193 is the Proton acceptor of the active site. Disordered regions lie at residues 332-376 (SASG…SAAA) and 463-499 (RRVS…RVKE). Positions 365–376 (SSSSANSSSAAA) are enriched in low complexity. Over residues 463–472 (RRVSQEDNDI) the composition is skewed to basic and acidic residues.

The protein belongs to the protein kinase superfamily. CMGC Ser/Thr protein kinase family. CDC2/CDKX subfamily. As to quaternary structure, component of the SRB8-11 complex, a regulatory module of the Mediator complex. Mg(2+) serves as cofactor.

It localises to the nucleus. The enzyme catalyses L-seryl-[protein] + ATP = O-phospho-L-seryl-[protein] + ADP + H(+). The catalysed reaction is L-threonyl-[protein] + ATP = O-phospho-L-threonyl-[protein] + ADP + H(+). It catalyses the reaction [DNA-directed RNA polymerase] + ATP = phospho-[DNA-directed RNA polymerase] + ADP + H(+). In terms of biological role, component of the SRB8-11 complex. The SRB8-11 complex is a regulatory module of the Mediator complex which is itself involved in regulation of basal and activated RNA polymerase II-dependent transcription. The SRB8-11 complex may be involved in the transcriptional repression of a subset of genes regulated by Mediator. It may inhibit the association of the Mediator complex with RNA polymerase II to form the holoenzyme complex. The SRB8-11 complex phosphorylates the C-terminal domain (CTD) of the largest subunit of RNA polymerase II. The chain is Serine/threonine-protein kinase SSN3 (SSN3) from Pyricularia oryzae (strain 70-15 / ATCC MYA-4617 / FGSC 8958) (Rice blast fungus).